A 128-amino-acid polypeptide reads, in one-letter code: Large ribosomal subunit protein uL22 (128 aa).

This sequence belongs to the universal ribosomal protein uL22 family. As to quaternary structure, part of the 50S ribosomal subunit.

This protein binds specifically to 23S rRNA; its binding is stimulated by other ribosomal proteins, e.g. L4, L17, and L20. It is important during the early stages of 50S assembly. It makes multiple contacts with different domains of the 23S rRNA in the assembled 50S subunit and ribosome. Functionally, the globular domain of the protein is located near the polypeptide exit tunnel on the outside of the subunit, while an extended beta-hairpin is found that lines the wall of the exit tunnel in the center of the 70S ribosome. The polypeptide is Large ribosomal subunit protein uL22 (Nitrobacter hamburgensis (strain DSM 10229 / NCIMB 13809 / X14)).